We begin with the raw amino-acid sequence, 87 residues long: Putative regulatory protein BCG9842_B1272 (87 aa).

Belongs to the RemA family.

The chain is Putative regulatory protein BCG9842_B1272 from Bacillus cereus (strain G9842).